The following is a 458-amino-acid chain: Transmembrane protein adipocyte-associated 1 homolog (458 aa).

N21 and N45 each carry an N-linked (GlcNAc...) asparagine glycan. Helical transmembrane passes span V81–I101, A114–M134, I152–F172, I181–I201, F225–L245, L263–I283, and L291–F311. Residues N323 and N324 are each glycosylated (N-linked (GlcNAc...) asparagine). Positions R409 to M458 are disordered. The span at G411–M422 shows a compositional bias: basic and acidic residues.

Belongs to the UPF0359 family.

It localises to the membrane. The polypeptide is Transmembrane protein adipocyte-associated 1 homolog (tpra-1) (Caenorhabditis elegans).